The primary structure comprises 122 residues: Large ribosomal subunit protein bL19 (122 aa).

It belongs to the bacterial ribosomal protein bL19 family.

This protein is located at the 30S-50S ribosomal subunit interface and may play a role in the structure and function of the aminoacyl-tRNA binding site. The sequence is that of Large ribosomal subunit protein bL19 from Acinetobacter baumannii (strain AB307-0294).